A 622-amino-acid polypeptide reads, in one-letter code: Polypeptide N-acetylgalactosaminyltransferase 6 (622 aa).

Over 1-8 (MRLLRRRH) the chain is Cytoplasmic. A helical; Signal-anchor for type II membrane protein transmembrane segment spans residues 9-28 (MAVRLVMVGSAFVLFLFILQ). Topologically, residues 29–622 (RDVSGREQAT…SDPHQHWLFI (594 aa)) are lumenal. N-linked (GlcNAc...) asparagine glycosylation occurs at Asn86. The disordered stretch occupies residues 103–135 (WERPPQDPNGPGADGKAFQKKEWTPQETQEKEE). The span at 119–135 (AFQKKEWTPQETQEKEE) shows a compositional bias: basic and acidic residues. The segment at 176 to 285 (LPATSVIIVF…HGWLEPLLAR (110 aa)) is catalytic subdomain A. Mn(2+) contacts are provided by Asp269, His271, and His407. Positions 348-410 (PIKSPTFAGG…PCSVVGHVFR (63 aa)) are catalytic subdomain B. N-linked (GlcNAc...) asparagine glycosylation is present at Asn476. Residues 507–622 (DHCLDVGENN…SDPHQHWLFI (116 aa)) form the Ricin B-type lectin domain. An intrachain disulfide couples Cys509 to Cys527. Residues Asp511, Glu514, His528, and Asn533 each contribute to the UDP-N-acetyl-alpha-D-galactosamine site. Disulfide bonds link Cys553–Cys566 and Cys597–Cys610.

This sequence belongs to the glycosyltransferase 2 family. GalNAc-T subfamily. The cofactor is Mn(2+).

It localises to the golgi apparatus membrane. The catalysed reaction is L-seryl-[protein] + UDP-N-acetyl-alpha-D-galactosamine = a 3-O-[N-acetyl-alpha-D-galactosaminyl]-L-seryl-[protein] + UDP + H(+). It carries out the reaction L-threonyl-[protein] + UDP-N-acetyl-alpha-D-galactosamine = a 3-O-[N-acetyl-alpha-D-galactosaminyl]-L-threonyl-[protein] + UDP + H(+). Its pathway is protein modification; protein glycosylation. Functionally, catalyzes the initial reaction in O-linked oligosaccharide biosynthesis, the transfer of an N-acetyl-D-galactosamine residue to a serine or threonine residue on the protein receptor. May participate in synthesis of oncofetal fibronectin. Has activity toward MUC1A, MUC2, EA2 and fibronectin peptides. In Bos taurus (Bovine), this protein is Polypeptide N-acetylgalactosaminyltransferase 6 (GALNT6).